Consider the following 250-residue polypeptide: 1-(5-phosphoribosyl)-5-[(5-phosphoribosylamino)methylideneamino] imidazole-4-carboxamide isomerase (250 aa).

Aspartate 12 serves as the catalytic Proton acceptor. Catalysis depends on aspartate 134, which acts as the Proton donor.

It belongs to the HisA/HisF family.

The protein localises to the cytoplasm. It carries out the reaction 1-(5-phospho-beta-D-ribosyl)-5-[(5-phospho-beta-D-ribosylamino)methylideneamino]imidazole-4-carboxamide = 5-[(5-phospho-1-deoxy-D-ribulos-1-ylimino)methylamino]-1-(5-phospho-beta-D-ribosyl)imidazole-4-carboxamide. Its pathway is amino-acid biosynthesis; L-histidine biosynthesis; L-histidine from 5-phospho-alpha-D-ribose 1-diphosphate: step 4/9. The chain is 1-(5-phosphoribosyl)-5-[(5-phosphoribosylamino)methylideneamino] imidazole-4-carboxamide isomerase from Actinobacillus pleuropneumoniae serotype 3 (strain JL03).